Reading from the N-terminus, the 486-residue chain is MKEIKHFISGELVGSASGKLFDNVSPANGQVIGRVHEAGRAEVDAAVRAARAALKGPWGKMTVAERAEILHRVADGITARFGEFLEARMPGHRQAEVAGQPHRHSARRANFKVFADLLKNVANEAFEMATPDGAGALNYGVRRPKGVIGVISPWNLPLLLMTWKVGPALACGNCVVVKPSEETPLTATLLGEVMQAAGVPAGVYNVVHGFGGDSAGAFLTEHPDVDAYTFTGETGTGETIMRAAAKGVRQVSLELGGKNAGIVFADCDMDKAIEGTLRSAFANCGQVCLGTERVYVERPIFDAFVARLKAGAEALKIGEPNDPEANFGPLISHKPREKVPSYYQQAVDDGATVVTGGGVPEMPAHLAGGAWVQPTIWTGLADDSAVVTEEIFGPCCHIRPFDSEEEAIELANSLPYGLASAIWTENVRRAHRVAGQIEAGIVWVNSWFLRDLRTAFGGSKQSGIGREGGVHSLEFYTELKNICVKL.

Residues glutamate 254 and cysteine 288 contribute to the active site.

This sequence belongs to the aldehyde dehydrogenase family. In terms of assembly, homodimer.

It catalyses the reaction (2Z,4E)-2-hydroxy-6-oxohexa-2,4-dienoate + NAD(+) + H2O = (2Z,4E)-2-hydroxyhexa-2,4-dienedioate + NADH + 2 H(+). Its pathway is aromatic compound metabolism; benzoate degradation via hydroxylation. Its function is as follows. 2-hydroxymuconic acid semialdehyde can be converted to 2-hydroxypent-2,4-dienoate either directly by the action of 2-hydroxymuconic semialdehyde hydrolase (HMSH) or by the action of three sequential enzymes, the first of which is HMSD. Can oxidize not only 2-hydroxymuconic semialdehyde and its analogs but also benzaldehyde and its analogs. The protein is 2-hydroxymuconic semialdehyde dehydrogenase (xylG) of Pseudomonas putida (Arthrobacter siderocapsulatus).